A 335-amino-acid polypeptide reads, in one-letter code: MFVDQITLELRAGKGGNGVVAWRKEKYLPKGGPYGGNGGNGGSILIEAVTNMYSFEEYRNLRFLKAGDGQAGASNNRTGKNGKDFVLKVPEGTLLRDAETGELIHDFTKDGERIVVCQGGRGGKGNVFFKTSTNRAPTKATPGKPGEIRLVELELKLIADIGLVGFPNAGKSTLFNTLARTEVKVGAYPFTTLHPSLGLVHQEGYLYQKPWIMADIPGIIEGASQNRGLGLDFLRHIERTRLLLFVVDISGIERSSPEKDLQILIGELLAYKEDLKNKSMVIALNKIDQLLPDEREERLALLKQQFPDQEFILLSGLTGEGVDVLHDLFKSKLSE.

The Obg domain maps to 1-158; sequence MFVDQITLEL…RLVELELKLI (158 aa). The OBG-type G domain occupies 159 to 334; sequence ADIGLVGFPN…LHDLFKSKLS (176 aa). GTP contacts are provided by residues 165 to 172, 190 to 194, 215 to 218, 285 to 288, and 315 to 317; these read GFPNAGKS, FTTLH, DIPG, NKID, and SGL. The Mg(2+) site is built by Ser-172 and Thr-192.

Belongs to the TRAFAC class OBG-HflX-like GTPase superfamily. OBG GTPase family. As to quaternary structure, monomer. Mg(2+) is required as a cofactor.

The protein localises to the cytoplasm. In terms of biological role, an essential GTPase which binds GTP, GDP and possibly (p)ppGpp with moderate affinity, with high nucleotide exchange rates and a fairly low GTP hydrolysis rate. Plays a role in control of the cell cycle, stress response, ribosome biogenesis and in those bacteria that undergo differentiation, in morphogenesis control. This Chlamydia muridarum (strain MoPn / Nigg) protein is GTPase Obg.